The primary structure comprises 315 residues: uncharacterized protein (315 aa).

It belongs to the carbohydrate kinase PfkB family.

This is an uncharacterized protein from Escherichia coli (strain K12).